The following is a 70-amino-acid chain: Conotoxin ba3a (70 aa).

The first 20 residues, 1 to 20 (MLKIGVMLSIILVLFPLATL), serve as a signal peptide directing secretion. Residues 21 to 55 (QLVAERPAAERYAENKQDLNPDERRNYLVDLGVER) constitute a propeptide that is removed on maturation.

As to expression, expressed by the venom duct.

It is found in the secreted. This chain is Conotoxin ba3a, found in Conus bayani (Bayan's cone).